Consider the following 79-residue polypeptide: MKYVALAFVLSLVILQISAQGGGLTSLLLQKEYMPDNWFDYKLAQMLLGGTRGRKSRTQSGRNQGKSTSDSWLWLALAS.

A signal peptide spans 1-19; that stretch reads MKYVALAFVLSLVILQISA. A disordered region spans residues 52–71; sequence RGRKSRTQSGRNQGKSTSDS. A compositionally biased stretch (polar residues) spans 58 to 71; that stretch reads TQSGRNQGKSTSDS.

As to expression, nacreous layer of shell (at protein level). Expressed primarily in the mantle with highest level in the mantle pallium and lower level in the mantle edge.

Its subcellular location is the secreted. This is an uncharacterized protein from Margaritifera margaritifera (Freshwater pearl mussel).